Reading from the N-terminus, the 357-residue chain is Cobalt-precorrin-5B C(1)-methyltransferase (357 aa).

Belongs to the CbiD family.

It catalyses the reaction Co-precorrin-5B + S-adenosyl-L-methionine = Co-precorrin-6A + S-adenosyl-L-homocysteine. It functions in the pathway cofactor biosynthesis; adenosylcobalamin biosynthesis; cob(II)yrinate a,c-diamide from sirohydrochlorin (anaerobic route): step 6/10. Its function is as follows. Catalyzes the methylation of C-1 in cobalt-precorrin-5B to form cobalt-precorrin-6A. The protein is Cobalt-precorrin-5B C(1)-methyltransferase of Rhodospirillum rubrum (strain ATCC 11170 / ATH 1.1.1 / DSM 467 / LMG 4362 / NCIMB 8255 / S1).